Reading from the N-terminus, the 177-residue chain is Adenine phosphoribosyltransferase (177 aa).

This sequence belongs to the purine/pyrimidine phosphoribosyltransferase family. Homodimer.

The protein localises to the cytoplasm. It carries out the reaction AMP + diphosphate = 5-phospho-alpha-D-ribose 1-diphosphate + adenine. Its pathway is purine metabolism; AMP biosynthesis via salvage pathway; AMP from adenine: step 1/1. In terms of biological role, catalyzes a salvage reaction resulting in the formation of AMP, that is energically less costly than de novo synthesis. In Rhodococcus jostii (strain RHA1), this protein is Adenine phosphoribosyltransferase.